The following is a 213-amino-acid chain: uncharacterized protein (213 aa).

The next 3 membrane-spanning stretches (helical) occupy residues 26–46, 112–132, and 136–156; these read FINF…GLKV, ASYI…AGIW, and AGLA…SFLI.

It is found in the cell membrane. This is an uncharacterized protein from Haemophilus influenzae (strain ATCC 51907 / DSM 11121 / KW20 / Rd).